A 270-amino-acid chain; its full sequence is Phosphoserine phosphatase (270 aa).

Catalysis depends on Asp67, which acts as the Nucleophile. Positions 67 and 69 each coordinate Mg(2+). Asp69 functions as the Proton donor in the catalytic mechanism. Substrate-binding positions include Glu76, Arg112, 156 to 157 (SG), and Lys205. Asp227 is a binding site for Mg(2+).

This sequence belongs to the HAD-like hydrolase superfamily. SerB family. The cofactor is Mg(2+).

The catalysed reaction is O-phospho-L-serine + H2O = L-serine + phosphate. The enzyme catalyses O-phospho-D-serine + H2O = D-serine + phosphate. It functions in the pathway amino-acid biosynthesis; L-serine biosynthesis; L-serine from 3-phospho-D-glycerate: step 3/3. Its function is as follows. Catalyzes the last step in the biosynthesis of serine from carbohydrates. The reaction mechanism proceeds via the formation of a phosphoryl-enzyme intermediates. This is Phosphoserine phosphatase (aay) from Drosophila melanogaster (Fruit fly).